The following is a 24-amino-acid chain: GFKDWIKGAAKKLIKTVAANIANQ.

Expressed by the skin glands.

The protein resides in the secreted. Antimicrobial peptide that shows higher potency against Gram-negative bacteria than against Gram-positive bacteria. Has a very week hemolytic activity. The polypeptide is Ascaphin-4 (Ascaphus truei (Coastal tailed frog)).